The sequence spans 83 residues: Small ribosomal subunit protein bS16 (83 aa).

It belongs to the bacterial ribosomal protein bS16 family.

The protein is Small ribosomal subunit protein bS16 of Chromobacterium violaceum (strain ATCC 12472 / DSM 30191 / JCM 1249 / CCUG 213 / NBRC 12614 / NCIMB 9131 / NCTC 9757 / MK).